A 213-amino-acid polypeptide reads, in one-letter code: Uridine kinase (213 aa).

Position 14-21 (Gly-14–Ser-21) interacts with ATP.

Belongs to the uridine kinase family.

It localises to the cytoplasm. The catalysed reaction is uridine + ATP = UMP + ADP + H(+). It carries out the reaction cytidine + ATP = CMP + ADP + H(+). The protein operates within pyrimidine metabolism; CTP biosynthesis via salvage pathway; CTP from cytidine: step 1/3. Its pathway is pyrimidine metabolism; UMP biosynthesis via salvage pathway; UMP from uridine: step 1/1. This Vibrio atlanticus (strain LGP32) (Vibrio splendidus (strain Mel32)) protein is Uridine kinase.